The primary structure comprises 475 residues: Splicing factor U2AF 65 kDa subunit (475 aa).

Positions 1-90 are disordered; it reads MSDFDEFERQ…RHEKKKKVRK (90 aa). Ser2 carries the N-acetylserine modification. Ser2 carries the phosphoserine modification. The interval 2 to 93 is required for interaction with PRPF19; it reads SDFDEFERQL…KKKKVRKYWD (92 aa). The segment covering 7-22 has biased composition (basic and acidic residues); the sequence is FERQLNENKQERDKEN. Lys15 bears the 5-hydroxylysine; by JMJD6; alternate mark. Lys15 is covalently cross-linked (Glycyl lysine isopeptide (Lys-Gly) (interchain with G-Cter in SUMO2); alternate). The interval 17–47 is necessary and sufficient to stimulate pre-mRNAs 3'-end cleavage in a CFIm complex-dependent manner; it reads ERDKENRHRKRSHSRSRSRDRKRRSRSRDRR. Over residues 23–46 the composition is skewed to basic residues; it reads RHRKRSHSRSRSRDRKRRSRSRDR. Residues 47-56 are compositionally biased toward basic and acidic residues; that stretch reads RNRDQRSASR. A Glycyl lysine isopeptide (Lys-Gly) (interchain with G-Cter in SUMO2); alternate cross-link involves residue Lys70. Residue Lys70 is modified to N6-acetyllysine; alternate. Ser79 carries the phosphoserine modification. Basic residues predominate over residues 79–89; the sequence is SPRHEKKKKVR. RRM domains follow at residues 149-231, 259-337, and 385-466; these read RRLY…RPHD, HKLF…RASV, and LPEE…YCDP. The residue at position 276 (Lys276) is a 5-hydroxylysine; by JMJD6. Position 294 is a phosphoserine (Ser294).

This sequence belongs to the splicing factor SR family. In terms of assembly, interacts with U2AF1L4. Heterodimer with U2AF1. Binds unphosphorylated SF1. Interacts with SCAF11 and SNW1. Interacts with ZRSR2/U2AF1-RS2. Interacts with RBM17. Interacts with PRPF19; the interaction is direct. Interacts with POLR2A (via the C-terminal domain); Interacts with PRPF19; the interaction is direct. Interacts with POLR2A (via the C-terminal domain); recruits PRPF19 and the Prp19 complex to the pre-mRNA. Interacts with KHDC4 (Isoform 2). Interacts with ZRSR2. Interacts with the SF3B complex composed of SF3B1, SF3B2, SF3B3, SF3B4, SF3B5, SF3B6 and PHF5A. Interacts (via N-terminus) with CPSF7 (via C-terminus); this interaction stimulates pre-mRNA 3'-end processing by promoting the recruitment of the CFIm complex to cleavage and polyadenylation signals. Interacts with ARGLU1; interaction may be involved in ARGLU1-mediated modulation of alternative splicing. Lysyl-hydroxylation at Lys-15 and Lys-276 affects the mRNA splicing activity of the protein, leading to regulate some, but not all, alternative splicing events.

It is found in the nucleus. Its function is as follows. Plays a role in pre-mRNA splicing and 3'-end processing. By recruiting PRPF19 and the PRP19C/Prp19 complex/NTC/Nineteen complex to the RNA polymerase II C-terminal domain (CTD), and thereby pre-mRNA, may couple transcription to splicing. Required for the export of mRNA out of the nucleus, even if the mRNA is encoded by an intron-less gene. Positively regulates pre-mRNA 3'-end processing by recruiting the CFIm complex to cleavage and polyadenylation signals. This is Splicing factor U2AF 65 kDa subunit (U2af2) from Mus musculus (Mouse).